A 500-amino-acid chain; its full sequence is Bifunctional protein GlmU (500 aa).

Residues 1 to 242 are pyrophosphorylase; sequence MPVQTAVVVL…SAKVAGANDR (242 aa). UDP-N-acetyl-alpha-D-glucosamine-binding positions include 10-13, Lys-24, Gln-81, and 86-87; these read LAAG and GT. Position 112 (Asp-112) interacts with Mg(2+). UDP-N-acetyl-alpha-D-glucosamine-binding residues include Gly-151, Glu-167, Asn-182, and Asn-240. Mg(2+) is bound at residue Asn-240. Positions 243-263 are linker; sequence VQLSRLAAELNRRTVENWMRA. The interval 264 to 500 is N-acetyltransferase; that stretch reads GVTVVDPSTT…KQDLKDGIEQ (237 aa). Arg-345 and Lys-363 together coordinate UDP-N-acetyl-alpha-D-glucosamine. Catalysis depends on His-375, which acts as the Proton acceptor. Tyr-378 and Asn-389 together coordinate UDP-N-acetyl-alpha-D-glucosamine. Acetyl-CoA-binding positions include Ala-392, 398-399, Ser-417, and Ala-435; that span reads NY. A disordered region spans residues 472 to 500; that stretch reads AEAAAAAGLHHSSDLHETEKQDLKDGIEQ. Over residues 482–500 the composition is skewed to basic and acidic residues; that stretch reads HSSDLHETEKQDLKDGIEQ.

It in the N-terminal section; belongs to the N-acetylglucosamine-1-phosphate uridyltransferase family. In the C-terminal section; belongs to the transferase hexapeptide repeat family. Homotrimer. The cofactor is Mg(2+).

The protein localises to the cytoplasm. It carries out the reaction alpha-D-glucosamine 1-phosphate + acetyl-CoA = N-acetyl-alpha-D-glucosamine 1-phosphate + CoA + H(+). It catalyses the reaction N-acetyl-alpha-D-glucosamine 1-phosphate + UTP + H(+) = UDP-N-acetyl-alpha-D-glucosamine + diphosphate. It functions in the pathway nucleotide-sugar biosynthesis; UDP-N-acetyl-alpha-D-glucosamine biosynthesis; N-acetyl-alpha-D-glucosamine 1-phosphate from alpha-D-glucosamine 6-phosphate (route II): step 2/2. It participates in nucleotide-sugar biosynthesis; UDP-N-acetyl-alpha-D-glucosamine biosynthesis; UDP-N-acetyl-alpha-D-glucosamine from N-acetyl-alpha-D-glucosamine 1-phosphate: step 1/1. The protein operates within bacterial outer membrane biogenesis; LPS lipid A biosynthesis. In terms of biological role, catalyzes the last two sequential reactions in the de novo biosynthetic pathway for UDP-N-acetylglucosamine (UDP-GlcNAc). The C-terminal domain catalyzes the transfer of acetyl group from acetyl coenzyme A to glucosamine-1-phosphate (GlcN-1-P) to produce N-acetylglucosamine-1-phosphate (GlcNAc-1-P), which is converted into UDP-GlcNAc by the transfer of uridine 5-monophosphate (from uridine 5-triphosphate), a reaction catalyzed by the N-terminal domain. The sequence is that of Bifunctional protein GlmU from Rhodococcus jostii (strain RHA1).